The primary structure comprises 196 residues: N-(5'-phosphoribosyl)anthranilate isomerase (196 aa).

It belongs to the TrpF family.

The enzyme catalyses N-(5-phospho-beta-D-ribosyl)anthranilate = 1-(2-carboxyphenylamino)-1-deoxy-D-ribulose 5-phosphate. The protein operates within amino-acid biosynthesis; L-tryptophan biosynthesis; L-tryptophan from chorismate: step 3/5. This is N-(5'-phosphoribosyl)anthranilate isomerase from Sulfurovum sp. (strain NBC37-1).